The following is a 51-amino-acid chain: Ribosomal protein eL39-like 2 (51 aa).

It belongs to the eukaryotic ribosomal protein eL39 family. Component of a male germ cell-specific 60S large ribosomal subunit (LSU), which contains RPL10L and RPL39L, instead of RPL10 and RPL39 paralogs. The composition of the rest of the complex is similar to classical ribosomes. Testis specific.

The protein localises to the cytoplasm. Its function is as follows. Male germ cell-specific component of the ribosome, which is required for the formation of sperm and male fertility. Replaces the RPL39 paralog in the ribosome of male germ cells. The ribosome is a large ribonucleoprotein complex responsible for the synthesis of proteins in the cell. The male germ cell-specific ribosome displays a ribosomal polypeptide exit tunnel of distinct size and charge states compared with the classical ribosome. It is responsible for regulating the biosynthesis and folding of a subset of male germ-cell-specific proteins that are essential for the formation of sperm. The chain is Ribosomal protein eL39-like 2 from Homo sapiens (Human).